The sequence spans 275 residues: Large ribosomal subunit protein uL2 (275 aa).

Disordered regions lie at residues 36–55 (GLTGSGGRNNTGRITARRMG) and 224–263 (VVMNPIDHPHGGGEGRTSGGRHPVTPWGKPTKGKKTRQNK).

Belongs to the universal ribosomal protein uL2 family. In terms of assembly, part of the 50S ribosomal subunit. Forms a bridge to the 30S subunit in the 70S ribosome.

Its function is as follows. One of the primary rRNA binding proteins. Required for association of the 30S and 50S subunits to form the 70S ribosome, for tRNA binding and peptide bond formation. It has been suggested to have peptidyltransferase activity; this is somewhat controversial. Makes several contacts with the 16S rRNA in the 70S ribosome. The sequence is that of Large ribosomal subunit protein uL2 from Rhodospirillum centenum (strain ATCC 51521 / SW).